The primary structure comprises 500 residues: ATP synthase subunit beta (500 aa).

Residue 155 to 162 (GGAGVGKT) participates in ATP binding.

It belongs to the ATPase alpha/beta chains family. As to quaternary structure, F-type ATPases have 2 components, CF(1) - the catalytic core - and CF(0) - the membrane proton channel. CF(1) has five subunits: alpha(3), beta(3), gamma(1), delta(1), epsilon(1). CF(0) has three main subunits: a(1), b(2) and c(9-12). The alpha and beta chains form an alternating ring which encloses part of the gamma chain. CF(1) is attached to CF(0) by a central stalk formed by the gamma and epsilon chains, while a peripheral stalk is formed by the delta and b chains.

The protein resides in the cell inner membrane. The catalysed reaction is ATP + H2O + 4 H(+)(in) = ADP + phosphate + 5 H(+)(out). Functionally, produces ATP from ADP in the presence of a proton gradient across the membrane. The catalytic sites are hosted primarily by the beta subunits. This Azobacteroides pseudotrichonymphae genomovar. CFP2 protein is ATP synthase subunit beta.